We begin with the raw amino-acid sequence, 338 residues long: Holliday junction branch migration complex subunit RuvB (338 aa).

The segment at 1 to 181 (MTRTITPSIT…FGVISRLEFY (181 aa)) is large ATPase domain (RuvB-L). Residues Leu20, Arg21, Gly62, Lys65, Thr66, Thr67, 128-130 (EDF), Arg171, Tyr181, and Arg218 contribute to the ATP site. Thr66 serves as a coordination point for Mg(2+). Residues 182–252 (TDEELAFIIT…VVQDALALLE (71 aa)) are small ATPAse domain (RuvB-S). The tract at residues 255–338 (EMGFDQMDRM…VPEPPQGKLF (84 aa)) is head domain (RuvB-H). Residues Arg310 and Arg315 each contribute to the DNA site.

The protein belongs to the RuvB family. In terms of assembly, homohexamer. Forms an RuvA(8)-RuvB(12)-Holliday junction (HJ) complex. HJ DNA is sandwiched between 2 RuvA tetramers; dsDNA enters through RuvA and exits via RuvB. An RuvB hexamer assembles on each DNA strand where it exits the tetramer. Each RuvB hexamer is contacted by two RuvA subunits (via domain III) on 2 adjacent RuvB subunits; this complex drives branch migration. In the full resolvosome a probable DNA-RuvA(4)-RuvB(12)-RuvC(2) complex forms which resolves the HJ.

It localises to the cytoplasm. It catalyses the reaction ATP + H2O = ADP + phosphate + H(+). Its function is as follows. The RuvA-RuvB-RuvC complex processes Holliday junction (HJ) DNA during genetic recombination and DNA repair, while the RuvA-RuvB complex plays an important role in the rescue of blocked DNA replication forks via replication fork reversal (RFR). RuvA specifically binds to HJ cruciform DNA, conferring on it an open structure. The RuvB hexamer acts as an ATP-dependent pump, pulling dsDNA into and through the RuvAB complex. RuvB forms 2 homohexamers on either side of HJ DNA bound by 1 or 2 RuvA tetramers; 4 subunits per hexamer contact DNA at a time. Coordinated motions by a converter formed by DNA-disengaged RuvB subunits stimulates ATP hydrolysis and nucleotide exchange. Immobilization of the converter enables RuvB to convert the ATP-contained energy into a lever motion, pulling 2 nucleotides of DNA out of the RuvA tetramer per ATP hydrolyzed, thus driving DNA branch migration. The RuvB motors rotate together with the DNA substrate, which together with the progressing nucleotide cycle form the mechanistic basis for DNA recombination by continuous HJ branch migration. Branch migration allows RuvC to scan DNA until it finds its consensus sequence, where it cleaves and resolves cruciform DNA. This chain is Holliday junction branch migration complex subunit RuvB, found in Geotalea uraniireducens (strain Rf4) (Geobacter uraniireducens).